The primary structure comprises 732 residues: Elongation factor 2 (732 aa).

The tr-type G domain maps to 19 to 260 (ERIRNIGIAA…MVVKHLPNPI (242 aa)). GTP contacts are provided by residues 28-35 (AHIDHGKT), 94-98 (DTPGH), and 148-151 (NKVD). Histidine 597 bears the Diphthamide mark.

It belongs to the TRAFAC class translation factor GTPase superfamily. Classic translation factor GTPase family. EF-G/EF-2 subfamily.

It localises to the cytoplasm. Catalyzes the GTP-dependent ribosomal translocation step during translation elongation. During this step, the ribosome changes from the pre-translocational (PRE) to the post-translocational (POST) state as the newly formed A-site-bound peptidyl-tRNA and P-site-bound deacylated tRNA move to the P and E sites, respectively. Catalyzes the coordinated movement of the two tRNA molecules, the mRNA and conformational changes in the ribosome. The polypeptide is Elongation factor 2 (fusA) (Pyrococcus abyssi (strain GE5 / Orsay)).